The primary structure comprises 728 residues: 1,4-alpha-glucan branching enzyme GlgB (728 aa).

The Nucleophile role is filled by Asp405. Residue Glu458 is the Proton donor of the active site.

It belongs to the glycosyl hydrolase 13 family. GlgB subfamily. Monomer.

The enzyme catalyses Transfers a segment of a (1-&gt;4)-alpha-D-glucan chain to a primary hydroxy group in a similar glucan chain.. The protein operates within glycan biosynthesis; glycogen biosynthesis. Catalyzes the formation of the alpha-1,6-glucosidic linkages in glycogen by scission of a 1,4-alpha-linked oligosaccharide from growing alpha-1,4-glucan chains and the subsequent attachment of the oligosaccharide to the alpha-1,6 position. The chain is 1,4-alpha-glucan branching enzyme GlgB from Salmonella paratyphi B (strain ATCC BAA-1250 / SPB7).